A 290-amino-acid polypeptide reads, in one-letter code: Tubulin polyglutamylase complex subunit 1 (290 aa).

The segment at 1–30 (MAAVEKRRQAVPPPAGFTDSGRQSVSRAAG) is disordered. Residues Ser34 and Ser266 each carry the phosphoserine modification.

As to quaternary structure, part of the neuronal tubulin polyglutamylase complex which contains TPGS1, TPGS2, TTLL1, LRRC49 and NICN1. Interacts with PCM1, CSTPP1 and LRRC49.

Its subcellular location is the cytoplasm. It localises to the cytoskeleton. It is found in the cilium axoneme. The protein resides in the flagellum axoneme. The protein localises to the cilium basal body. Its subcellular location is the flagellum basal body. It localises to the cell projection. It is found in the axon. The protein resides in the dendrite. The protein localises to the microtubule organizing center. Its subcellular location is the centrosome. It localises to the centriolar satellite. Functionally, subunit of the tubulin polyglutamylase complex (TPGC). The complex mediates cilia and flagella polyglutamylation which is essential for their biogenesis and motility. May act in the targeting of the tubulin polyglutamylase complex. Required for the development of the spermatid flagellum. This Homo sapiens (Human) protein is Tubulin polyglutamylase complex subunit 1.